The sequence spans 613 residues: Threonine--tRNA ligase (613 aa).

Residues 1 to 147 (MRLLLIHARS…TITPQESAPQ (147 aa)) form an editing domain region. Catalytic regions lie at residues 199–495 (PRYI…PALP) and 200–495 (RYID…PALP). The Zn(2+) site is built by Cys292, His343, and His464.

The protein belongs to the class-II aminoacyl-tRNA synthetase family. As to quaternary structure, homodimer. Zn(2+) serves as cofactor.

The protein resides in the cytoplasm. The catalysed reaction is tRNA(Thr) + L-threonine + ATP = L-threonyl-tRNA(Thr) + AMP + diphosphate + H(+). Catalyzes the attachment of threonine to tRNA(Thr) in a two-step reaction: L-threonine is first activated by ATP to form Thr-AMP and then transferred to the acceptor end of tRNA(Thr). Also edits incorrectly charged L-seryl-tRNA(Thr). The protein is Threonine--tRNA ligase of Caldivirga maquilingensis (strain ATCC 700844 / DSM 13496 / JCM 10307 / IC-167).